A 682-amino-acid chain; its full sequence is MTGQAALERSVSSHRLSVRSRLEGEAERAESAISRTDGDDDTCSELQRVTALELPSAEMLEAFTQRRPLARLVNLVLSLREWAHKSLVETEQRPDSFLERFRGPQAANDQSAAPADAPKKTFKERWEGFVVSQSDDIYYYWLFFIALASLYNWIMLVARACFDQLQDENFFLWVGLDYLCDVIYILDTCIRLRTGYLEQGLLVKDLAKLRDNYIRTLQFKLDFLSILPTELLFFVTGYVPQLRFNRLLRFSRMFEFFDRTETRTNYPNAFRICNLILYILVIIHWNACIYYAISKALGLSSDTWVYSGQNKTLSFCYVYCFYWSTLTLTTIGEMPPPVKDEEYVFVVFDFLVGVLIFATIVGNVGSMIANMNATRAEFQTRIDAIKHYMHFRKVNRTLETRVIKWFDYLWTNKKTVDEQEVLKNLPDKLRAEIAINVHLDTLKKVRIFQDCEAGLLVELVLKLRPQVYSPGDYICRKGDIGKEMYIIKEGQLAVVADDGVTQFALLTAGGCFGEISILNIQGSKMGNRRTANIRSIGYSDLFCLSKDDLMEAVAEYPDAQKVLEERGREILRKQGLLDESVAAGGLGVIDTEEKVERLDASLDILQTRFARLLGEFTSTQRRLKQRITALERQLCHTGLGLLSDNEAEGEHAGVPTHTHADIHAQPETHTRTSAETNSEEET.

Positions 1–41 (MTGQAALERSVSSHRLSVRSRLEGEAERAESAISRTDGDDD) are disordered. The Cytoplasmic portion of the chain corresponds to 1–136 (MTGQAALERS…EGFVVSQSDD (136 aa)). The span at 20–30 (SRLEGEAERAE) shows a compositional bias: basic and acidic residues. The chain crosses the membrane as a helical span at residues 137–157 (IYYYWLFFIALASLYNWIMLV). Topologically, residues 158–169 (ARACFDQLQDEN) are extracellular. The chain crosses the membrane as a helical span at residues 170-190 (FFLWVGLDYLCDVIYILDTCI). Residues 191–218 (RLRTGYLEQGLLVKDLAKLRDNYIRTLQ) are Cytoplasmic-facing. A helical transmembrane segment spans residues 219–239 (FKLDFLSILPTELLFFVTGYV). Over 240 to 272 (PQLRFNRLLRFSRMFEFFDRTETRTNYPNAFRI) the chain is Extracellular. Residues 273-293 (CNLILYILVIIHWNACIYYAI) traverse the membrane as a helical segment. Residues 294 to 311 (SKALGLSSDTWVYSGQNK) are Cytoplasmic-facing. A helical membrane pass occupies residues 312-332 (TLSFCYVYCFYWSTLTLTTIG). At 333-343 (EMPPPVKDEEY) the chain is on the extracellular side. A helical membrane pass occupies residues 344-364 (VFVVFDFLVGVLIFATIVGNV). Residues 365–682 (GSMIANMNAT…SAETNSEEET (318 aa)) lie on the Cytoplasmic side of the membrane. 3',5'-cyclic AMP is bound by residues 455-577 (LLVE…QGLL), Glu-514, and Arg-529. Residues 649–682 (GEHAGVPTHTHADIHAQPETHTRTSAETNSEEET) are disordered. A compositionally biased stretch (basic and acidic residues) spans 658–672 (THADIHAQPETHTRT).

It belongs to the cyclic nucleotide-gated cation channel (TC 1.A.1.5) family. In terms of tissue distribution, olfactory neurons.

It localises to the membrane. Functionally, this cyclic nucleotide-gated channel is activated equally well by both cAMP and cGMP. The sequence is that of Cyclic nucleotide-gated cation channel from Ictalurus punctatus (Channel catfish).